Reading from the N-terminus, the 438-residue chain is 23S rRNA (uracil(1939)-C(5))-methyltransferase RlmD (438 aa).

Positions 11-69 (LQPESKHQQVLVEKLDHQGAGIAYLNKKPLFIDGTLPGEEVVTQLTESKSKFARGKLIK) constitute a TRAM domain. C82, C88, C91, and C169 together coordinate [4Fe-4S] cluster. Residues Q272, F301, N306, E322, N349, and D370 each contribute to the S-adenosyl-L-methionine site. C396 functions as the Nucleophile in the catalytic mechanism.

The protein belongs to the class I-like SAM-binding methyltransferase superfamily. RNA M5U methyltransferase family. RlmD subfamily.

The enzyme catalyses uridine(1939) in 23S rRNA + S-adenosyl-L-methionine = 5-methyluridine(1939) in 23S rRNA + S-adenosyl-L-homocysteine + H(+). In terms of biological role, catalyzes the formation of 5-methyl-uridine at position 1939 (m5U1939) in 23S rRNA. The chain is 23S rRNA (uracil(1939)-C(5))-methyltransferase RlmD from Vibrio vulnificus (strain YJ016).